A 393-amino-acid polypeptide reads, in one-letter code: tRNA(Met) cytidine acetate ligase (393 aa).

ATP-binding residues include glycine 81, asparagine 142, and arginine 167.

This sequence belongs to the TmcAL family.

It localises to the cytoplasm. It carries out the reaction cytidine(34) in elongator tRNA(Met) + acetate + ATP = N(4)-acetylcytidine(34) in elongator tRNA(Met) + AMP + diphosphate. Its function is as follows. Catalyzes the formation of N(4)-acetylcytidine (ac(4)C) at the wobble position of elongator tRNA(Met), using acetate and ATP as substrates. First activates an acetate ion to form acetyladenylate (Ac-AMP) and then transfers the acetyl group to tRNA to form ac(4)C34. The chain is tRNA(Met) cytidine acetate ligase from Bacillus thuringiensis (strain Al Hakam).